We begin with the raw amino-acid sequence, 96 residues long: Putative septation protein SpoVG (96 aa).

It belongs to the SpoVG family.

Functionally, could be involved in septation. In Oceanobacillus iheyensis (strain DSM 14371 / CIP 107618 / JCM 11309 / KCTC 3954 / HTE831), this protein is Putative septation protein SpoVG.